A 449-amino-acid chain; its full sequence is NADP-specific glutamate dehydrogenase (449 aa).

Residue lysine 125 is part of the active site.

The protein belongs to the Glu/Leu/Phe/Val dehydrogenases family. Homohexamer.

The catalysed reaction is L-glutamate + NADP(+) + H2O = 2-oxoglutarate + NH4(+) + NADPH + H(+). The polypeptide is NADP-specific glutamate dehydrogenase (Giardia intestinalis (Giardia lamblia)).